The chain runs to 733 residues: 1,4-alpha-glucan branching enzyme GlgB (733 aa).

Asp409 functions as the Nucleophile in the catalytic mechanism. The Proton donor role is filled by Glu462.

Belongs to the glycosyl hydrolase 13 family. GlgB subfamily. As to quaternary structure, monomer.

It carries out the reaction Transfers a segment of a (1-&gt;4)-alpha-D-glucan chain to a primary hydroxy group in a similar glucan chain.. It participates in glycan biosynthesis; glycogen biosynthesis. Its function is as follows. Catalyzes the formation of the alpha-1,6-glucosidic linkages in glycogen by scission of a 1,4-alpha-linked oligosaccharide from growing alpha-1,4-glucan chains and the subsequent attachment of the oligosaccharide to the alpha-1,6 position. This chain is 1,4-alpha-glucan branching enzyme GlgB, found in Gloeobacter violaceus (strain ATCC 29082 / PCC 7421).